The chain runs to 486 residues: Mitogen-activated protein kinase 17 (486 aa).

The 292-residue stretch at 16-307 folds into the Protein kinase domain; sequence YQIQEVVGKG…AEEALADPYF (292 aa). ATP contacts are provided by residues 22 to 30 and Lys45; that span reads VGKGSYGVV. Residue Asp142 is the Proton acceptor of the active site. At Thr178 the chain carries Phosphothreonine. The TXY motif lies at 178-180; it reads TDY. Phosphotyrosine is present on Tyr180. Residue Thr183 is modified to Phosphothreonine. The segment at 386–455 is disordered; it reads EEHNDDEEEH…LSSQKASQVD (70 aa). Positions 422 to 433 are enriched in low complexity; that stretch reads SVHAQSSSASVV. The span at 440-452 shows a compositional bias: polar residues; sequence PNTATGLSSQKAS.

The protein belongs to the protein kinase superfamily. CMGC Ser/Thr protein kinase family. MAP kinase subfamily. Dually phosphorylated on Thr-178 and Tyr-180, which activates the enzyme.

It carries out the reaction L-seryl-[protein] + ATP = O-phospho-L-seryl-[protein] + ADP + H(+). The enzyme catalyses L-threonyl-[protein] + ATP = O-phospho-L-threonyl-[protein] + ADP + H(+). With respect to regulation, activated by threonine and tyrosine phosphorylation. This is Mitogen-activated protein kinase 17 (MPK17) from Arabidopsis thaliana (Mouse-ear cress).